Consider the following 457-residue polypeptide: MQKYISEARLLLALAIPVILAQIAQTAMGFVDTVMAGGYSATDMAAVAIGTSIWLPAILFGHGLLLALTPVIAQLNGSGRRERIAHQVRQGFWLAGFVSVLIMLVLWNAGYIIRSMENIDPALADKAVGYLRALLWGAPGYLFFQVARNQCEGLAKTKPGMVMGFIGLLVNIPVNYIFIYGHFGMPELGGVGCGVATAAVYWVMFLAMVSYIKRARSMRDIRNEKGTAKPDPAVMKRLIQLGLPIALALFFEVTLFAVVALLVSPLGIVDVAGHQIALNFSSLMFVLPMSLAAAVTIRVGYRLGQGSTLDAQTAARTGLMVGVCMATLTAIFTVSLREQIALLYNDNPEVVTLAAHLMLLAAVYQISDSIQVIGSGILRGYKDTRSIFYITFTAYWVLGLPSGYILALTDLVVEPMGPAGFWIGFIIGLTSAAIMMMLRMRFLQRLPSAIILQRASR.

12 helical membrane-spanning segments follow: residues leucine 11–valine 31, isoleucine 53–alanine 73, tryptophan 93–isoleucine 113, alanine 127–alanine 147, glycine 160–tyrosine 180, glycine 189–valine 209, leucine 243–valine 263, isoleucine 276–threonine 296, alanine 314–valine 334, valine 350–isoleucine 370, isoleucine 387–alanine 407, and proline 418–leucine 438.

This sequence belongs to the multi antimicrobial extrusion (MATE) (TC 2.A.66.1) family. MdtK subfamily.

It is found in the cell inner membrane. Multidrug efflux pump that functions probably as a Na(+)/drug antiporter. The sequence is that of Multidrug resistance protein MdtK from Escherichia coli O127:H6 (strain E2348/69 / EPEC).